The following is a 1571-amino-acid chain: Pentafunctional AROM polypeptide (1571 aa).

The interval 1 to 380 (MTSVEKVSIL…YQLKAHQVSK (380 aa)) is 3-dehydroquinate synthase. NAD(+) contacts are provided by residues 43-45 (DTN), 81-84 (ENNK), 112-114 (GGV), and D117. R128 lines the 7-phospho-2-dehydro-3-deoxy-D-arabino-heptonate pocket. Position 137 to 138 (137 to 138 (TS)) interacts with NAD(+). Positions 144 and 150 each coordinate 7-phospho-2-dehydro-3-deoxy-D-arabino-heptonate. K159 provides a ligand contact to NAD(+). 7-phospho-2-dehydro-3-deoxy-D-arabino-heptonate is bound at residue N160. Residues 177–180 (FLET) and N188 contribute to the NAD(+) site. E192 serves as a coordination point for Zn(2+). 7-phospho-2-dehydro-3-deoxy-D-arabino-heptonate contacts are provided by residues 192 to 195 (EVVK) and K244. Catalysis depends on E254, which acts as the Proton acceptor; for 3-dehydroquinate synthase activity. 7-phospho-2-dehydro-3-deoxy-D-arabino-heptonate contacts are provided by residues 258-262 (RNLLN) and H265. Residue H265 participates in Zn(2+) binding. Residue H269 is the Proton acceptor; for 3-dehydroquinate synthase activity of the active site. Residues H281 and K352 each coordinate 7-phospho-2-dehydro-3-deoxy-D-arabino-heptonate. H281 provides a ligand contact to Zn(2+). The tract at residues 393–843 (VHPFDDKLIP…WDILHTKFKV (451 aa)) is EPSP synthase. C825 serves as the catalytic For EPSP synthase activity. A shikimate kinase region spans residues 868-1058 (KRSIIVIGMR…IPKKRSFYTS (191 aa)). ATP is bound at residue 875–882 (GMRGAGKS). Positions 1059–1271 (LTFSDLTEVA…GNEGALDVAQ (213 aa)) are 3-dehydroquinase. The active-site Schiff-base intermediate with substrate; for 3-dehydroquinate dehydratase activity is K1204. The tract at residues 1284-1571 (EKHFWIVGNP…DVVHDAVVNQ (288 aa)) is shikimate dehydrogenase.

This sequence in the N-terminal section; belongs to the sugar phosphate cyclases superfamily. Dehydroquinate synthase family. It in the 2nd section; belongs to the EPSP synthase family. In the 3rd section; belongs to the shikimate kinase family. The protein in the 4th section; belongs to the type-I 3-dehydroquinase family. This sequence in the C-terminal section; belongs to the shikimate dehydrogenase family. Homodimer. It depends on Zn(2+) as a cofactor.

The protein resides in the cytoplasm. It carries out the reaction 7-phospho-2-dehydro-3-deoxy-D-arabino-heptonate = 3-dehydroquinate + phosphate. The enzyme catalyses 3-dehydroquinate = 3-dehydroshikimate + H2O. The catalysed reaction is shikimate + NADP(+) = 3-dehydroshikimate + NADPH + H(+). It catalyses the reaction shikimate + ATP = 3-phosphoshikimate + ADP + H(+). It carries out the reaction 3-phosphoshikimate + phosphoenolpyruvate = 5-O-(1-carboxyvinyl)-3-phosphoshikimate + phosphate. Its pathway is metabolic intermediate biosynthesis; chorismate biosynthesis; chorismate from D-erythrose 4-phosphate and phosphoenolpyruvate: step 2/7. It functions in the pathway metabolic intermediate biosynthesis; chorismate biosynthesis; chorismate from D-erythrose 4-phosphate and phosphoenolpyruvate: step 3/7. The protein operates within metabolic intermediate biosynthesis; chorismate biosynthesis; chorismate from D-erythrose 4-phosphate and phosphoenolpyruvate: step 4/7. It participates in metabolic intermediate biosynthesis; chorismate biosynthesis; chorismate from D-erythrose 4-phosphate and phosphoenolpyruvate: step 5/7. Its pathway is metabolic intermediate biosynthesis; chorismate biosynthesis; chorismate from D-erythrose 4-phosphate and phosphoenolpyruvate: step 6/7. Its function is as follows. The AROM polypeptide catalyzes 5 consecutive enzymatic reactions in prechorismate polyaromatic amino acid biosynthesis. This chain is Pentafunctional AROM polypeptide, found in Scheffersomyces stipitis (strain ATCC 58785 / CBS 6054 / NBRC 10063 / NRRL Y-11545) (Yeast).